The chain runs to 73 residues: Conotoxin CnIIIF (73 aa).

The signal sequence occupies residues 1-19 (MSKLGVLLTICLLLFPLTA). The propeptide occupies 20–51 (LPMDGDQSVDRPAERMQDDISSGQHPLFNQKR). Intrachain disulfides connect Cys53-Cys72, Cys54-Cys70, and Cys60-Cys73.

This sequence belongs to the conotoxin M superfamily. In terms of tissue distribution, expressed by the venom duct.

Its subcellular location is the secreted. In terms of biological role, shows a paralytic effect in fish. The chain is Conotoxin CnIIIF from Conus consors (Singed cone).